A 414-amino-acid chain; its full sequence is uncharacterized protein (414 aa).

In terms of domain architecture, Nop spans 246–360 (EAPNITKLAG…LNKRVEEIRR (115 aa)). Positions 358–414 (IRRKYPKPPKKKKKEKPKAKKKEKKGKKEKSKKKKDKKKDKKGKKERKVIGKTKSRK) are disordered. Residues 361-414 (KYPKPPKKKKKEKPKAKKKEKKGKKEKSKKKKDKKKDKKGKKERKVIGKTKSRK) show a composition bias toward basic residues.

Belongs to the NOP5/NOP56 family.

This is an uncharacterized protein from Methanocaldococcus jannaschii (strain ATCC 43067 / DSM 2661 / JAL-1 / JCM 10045 / NBRC 100440) (Methanococcus jannaschii).